An 841-amino-acid chain; its full sequence is Taste receptor type 1 member 1 (841 aa).

A signal peptide spans 1 to 20 (MLLCTARLVGLQLLISCCWA). Topologically, residues 21–567 (FACHSTESSP…VFLALREHTS (547 aa)) are extracellular. 6 N-linked (GlcNAc...) asparagine glycosylation sites follow: asparagine 87, asparagine 88, asparagine 95, asparagine 291, asparagine 479, and asparagine 529. Residues 568–588 (WVLLAANTLLLLLLLGTAGLF) traverse the membrane as a helical segment. The Cytoplasmic segment spans residues 589-603 (AWHLDTPVVRSAGGR). The chain crosses the membrane as a helical span at residues 604-624 (LCFLMLGSLAAGSGSLYGFFG). The Extracellular segment spans residues 625–639 (EPTRPACLLRQALFA). A helical transmembrane segment spans residues 640 to 660 (LGFTIFLSCLTVRSFQLIIIF). Topologically, residues 661–680 (KFSTKVPTFYHAWVQNHGAG) are cytoplasmic. Residues 681–701 (LFVMISSAAQLLICLTWLVVW) form a helical membrane-spanning segment. Over 702–725 (TPLPAREYQRFPHLVMLECTETNS) the chain is Extracellular. A helical transmembrane segment spans residues 726–746 (LGFILAFLYNGLLSISAFACS). Over 747–761 (YLGKDLPENYNEAKC) the chain is Cytoplasmic. The chain crosses the membrane as a helical span at residues 762-782 (VTFSLLFNFVSWIAFFTTASV). The Extracellular segment spans residues 783–795 (YDGKYLPAANMMA). A helical membrane pass occupies residues 796–816 (GLSSLSSGFGGYFLPKCYVIL). Topologically, residues 817-841 (CRPDLNSTEHFQASIQDYTRRCGST) are cytoplasmic.

The protein belongs to the G-protein coupled receptor 3 family. TAS1R subfamily. Forms heterodimers with TAS1R3.

It is found in the cell membrane. In terms of biological role, putative taste receptor. TAS1R1/TAS1R3 responds to the umami taste stimulus (the taste of monosodium glutamate). Sequence differences within and between species can significantly influence the selectivity and specificity of taste responses. In Homo sapiens (Human), this protein is Taste receptor type 1 member 1 (TAS1R1).